The sequence spans 449 residues: Type 3 secretion system ATPase (449 aa).

ATP is bound at residue 178–183; the sequence is GCGKTT.

Belongs to the ATPase alpha/beta chains family. T3SS ATPase subfamily. As to quaternary structure, the core secretion machinery of the T3SS is composed of approximately 20 different proteins, including cytoplasmic components, a base, an export apparatus and a needle. This subunit is part of the cytosolic complex. Forms homododecamers. Comprises two hexameric rings that are probably stacked face-to-face by the association of their C-terminal domains. Also present as monomer and homohexamer in solution.

The protein resides in the cytoplasm. It carries out the reaction ATP + H2O + cellular proteinSide 1 = ADP + phosphate + cellular proteinSide 2.. Oligomerization increases ATPase activity. Its function is as follows. ATPase component of the type III secretion system (T3SS), also called injectisome, which is used to inject bacterial effector proteins into eukaryotic host cells. Acts as a molecular motor to provide the energy that is required for the export of proteins. Required for type III secretion apparatus (T3SA) formation, proper protein secretion, host cell invasion and virulence. May play a critical role in T3SS substrate recognition, disassembly of the effector/chaperone complex and unfolding of the effector in an ATP-dependent manner prior to secretion. The polypeptide is Type 3 secretion system ATPase (Pseudomonas savastanoi pv. phaseolicola (Pseudomonas syringae pv. phaseolicola)).